The following is a 157-amino-acid chain: Peptide methionine sulfoxide reductase MsrA (157 aa).

Cys13 is a catalytic residue.

This sequence belongs to the MsrA Met sulfoxide reductase family.

The enzyme catalyses L-methionyl-[protein] + [thioredoxin]-disulfide + H2O = L-methionyl-(S)-S-oxide-[protein] + [thioredoxin]-dithiol. The catalysed reaction is [thioredoxin]-disulfide + L-methionine + H2O = L-methionine (S)-S-oxide + [thioredoxin]-dithiol. Has an important function as a repair enzyme for proteins that have been inactivated by oxidation. Catalyzes the reversible oxidation-reduction of methionine sulfoxide in proteins to methionine. This is Peptide methionine sulfoxide reductase MsrA from Methanococcus maripaludis (strain C7 / ATCC BAA-1331).